A 533-amino-acid chain; its full sequence is D-3-phosphoglycerate dehydrogenase (533 aa).

An N-acetylalanine modification is found at alanine 2. Serine 14 bears the Phosphoserine mark. An N6-acetyllysine modification is found at lysine 58. NAD(+) is bound by residues threonine 78, 155–156 (RI), aspartate 175, threonine 207, 234–236 (CAR), and aspartate 260. The residue at position 78 (threonine 78) is a Phosphothreonine. Arginine 236 is a catalytic residue. Glutamate 265 is an active-site residue. The active-site Proton donor is histidine 283. 283-286 (HLGA) contacts NAD(+).

This sequence belongs to the D-isomer specific 2-hydroxyacid dehydrogenase family. Homotetramer.

It catalyses the reaction (2R)-3-phosphoglycerate + NAD(+) = 3-phosphooxypyruvate + NADH + H(+). The catalysed reaction is (R)-2-hydroxyglutarate + NAD(+) = 2-oxoglutarate + NADH + H(+). The enzyme catalyses (S)-malate + NAD(+) = oxaloacetate + NADH + H(+). The protein operates within amino-acid biosynthesis; L-serine biosynthesis; L-serine from 3-phospho-D-glycerate: step 1/3. Functionally, catalyzes the reversible oxidation of 3-phospho-D-glycerate to 3-phosphonooxypyruvate, the first step of the phosphorylated L-serine biosynthesis pathway. Also catalyzes the reversible oxidation of 2-hydroxyglutarate to 2-oxoglutarate and the reversible oxidation of (S)-malate to oxaloacetate. This Sus scrofa (Pig) protein is D-3-phosphoglycerate dehydrogenase (PHGDH).